Consider the following 160-residue polypeptide: MAKYEIMLVVRGDLDQEQANKVANELKATLKNTEVKENNYEGVQQLAYEINKLKTAYRYVYNFETTDVSLINEFRRLAIINKNVLRHIIINLEKDYGYKATVNAKKVQRNEKRAEVYVRQKEEAERRAAERQAAYEAMKAEREAAGLPVKEFVKGANSKR.

This sequence belongs to the bacterial ribosomal protein bS6 family.

Functionally, binds together with bS18 to 16S ribosomal RNA. This is Small ribosomal subunit protein bS6 from Ureaplasma urealyticum serovar 10 (strain ATCC 33699 / Western).